The sequence spans 148 residues: Prefoldin subunit 2 (148 aa).

Residues 87–114 adopt a coiled-coil conformation; that stretch reads KDGLEEVVRKLYETLEKKKKDLTEFEAK. A compositionally biased stretch (basic and acidic residues) spans 122–134; that stretch reads QEDNKEGGNKKEG. The segment at 122–148 is disordered; that stretch reads QEDNKEGGNKKEGNAQGVLVGAASSSQ.

Belongs to the prefoldin subunit beta family. Heterohexamer of two PFD-alpha type and four PFD-beta type subunits forming prefoldin co-chaperone complex. Interacts with LSM8, a specific subunit of the LSM2-8 complex, which is a core component of the spliceosome.

It is found in the cytoplasm. The protein localises to the nucleus. In terms of biological role, binds specifically to cytosolic chaperonin (c-CPN) and transfers target proteins to it. Binds to nascent polypeptide chain and promotes folding in an environment in which there are many competing pathways for nonnative proteins. Together with other chaperonins, contribute to the regulation of gene expression by modulating the spliceosome function on pre-mRNA splicing post-transcriptionally by acting as a co-chaperone of Hsp90 to control levels of LSM8. Required for microtubules (MTs) organization and dynamicity. Involved in the process leading to microtubules dissociation in response to gibberellic acid (GA) probably due to the DELLA proteins-mediated translocation of the prefoldin co-chaperone complex from the cytoplasm to the nucleus. This is Prefoldin subunit 2 from Arabidopsis thaliana (Mouse-ear cress).